A 577-amino-acid polypeptide reads, in one-letter code: Protein hinderin (577 aa).

Ser21 carries the post-translational modification Phosphoserine. Residues 91–167 adopt a coiled-coil conformation; sequence LKDLCLEDKR…CQELLSLYQK (77 aa). The residue at position 179 (Ser179) is a Phosphoserine. A disordered region spans residues 251-282; that stretch reads TLHHPKDDLDKIPSETTTCNCESPGRKPAVPT. A compositionally biased stretch (basic and acidic residues) spans 254–263; the sequence is HPKDDLDKIP. Residues 358-402 are a coiled coil; sequence LKKQISEDRKQQLMLQKMELEIEKERLQHLLAQQETKLLLKQQQL. Disordered stretches follow at residues 425 to 444, 449 to 492, and 520 to 540; these read SSSIKKHQDPPNSGENRKER, FHSH…GSLK, and LSPNSAPKPQRYPSREAGAWN. Over residues 449–468 the composition is skewed to basic and acidic residues; that stretch reads FHSHMKDDAQWSCQKKDTCR. Ser490 and Ser521 each carry phosphoserine.

In terms of assembly, interacts (via N- and C-terminal domains) with SMC3 (via central hinge region). In terms of tissue distribution, widely expressed.

Its function is as follows. Competes with SMC1 for binding to SMC3. May affect the availability of SMC3 to engage in the formation of multimeric protein complexes. The sequence is that of Protein hinderin (KIAA1328) from Homo sapiens (Human).